A 146-amino-acid chain; its full sequence is Bacterial hemoglobin (146 aa).

One can recognise a Globin domain in the interval 1–138 (MLDQQTINII…IADVFIQVEA (138 aa)). Heme b-binding residues include Q53 and H85.

The protein belongs to the globin family. Homodimer.

Functionally, this protein functions as a terminal oxidase. This chain is Bacterial hemoglobin (vhb), found in Vitreoscilla stercoraria.